The sequence spans 667 residues: DNA ligase (667 aa).

NAD(+) is bound by residues 32-36 (DSEYD), 81-82 (SL), and glutamate 110. Lysine 112 (N6-AMP-lysine intermediate) is an active-site residue. 4 residues coordinate NAD(+): arginine 133, glutamate 167, lysine 283, and lysine 307. Zn(2+)-binding residues include cysteine 401, cysteine 404, cysteine 419, and cysteine 424. The 82-residue stretch at 586-667 (EGHPDFKDKT…FVQKQNEIEG (82 aa)) folds into the BRCT domain.

It belongs to the NAD-dependent DNA ligase family. LigA subfamily. Mg(2+) is required as a cofactor. It depends on Mn(2+) as a cofactor.

It carries out the reaction NAD(+) + (deoxyribonucleotide)n-3'-hydroxyl + 5'-phospho-(deoxyribonucleotide)m = (deoxyribonucleotide)n+m + AMP + beta-nicotinamide D-nucleotide.. Its function is as follows. DNA ligase that catalyzes the formation of phosphodiester linkages between 5'-phosphoryl and 3'-hydroxyl groups in double-stranded DNA using NAD as a coenzyme and as the energy source for the reaction. It is essential for DNA replication and repair of damaged DNA. The protein is DNA ligase of Staphylococcus saprophyticus subsp. saprophyticus (strain ATCC 15305 / DSM 20229 / NCIMB 8711 / NCTC 7292 / S-41).